The primary structure comprises 306 residues: tRNA pseudouridine synthase B (306 aa).

Aspartate 47 functions as the Nucleophile in the catalytic mechanism.

It belongs to the pseudouridine synthase TruB family. Type 1 subfamily.

The enzyme catalyses uridine(55) in tRNA = pseudouridine(55) in tRNA. Responsible for synthesis of pseudouridine from uracil-55 in the psi GC loop of transfer RNAs. The protein is tRNA pseudouridine synthase B of Neisseria meningitidis serogroup A / serotype 4A (strain DSM 15465 / Z2491).